A 375-amino-acid polypeptide reads, in one-letter code: Neutral protease 2 homolog MGYG_00813 (375 aa).

The first 19 residues, Met1 to Gly19, serve as a signal peptide directing secretion. Residues Phe20–Arg190 constitute a propeptide that is removed on maturation. Intrachain disulfides connect Cys198–Cys268 and Cys275–Cys293. Residue His318 coordinates Zn(2+). Residue Glu319 is part of the active site. Residues His322 and Asp333 each contribute to the Zn(2+) site.

This sequence belongs to the peptidase M35 family. It depends on Zn(2+) as a cofactor.

The protein resides in the secreted. It carries out the reaction Preferential cleavage of bonds with hydrophobic residues in P1'. Also 3-Asn-|-Gln-4 and 8-Gly-|-Ser-9 bonds in insulin B chain.. In terms of biological role, secreted metalloproteinase that allows assimilation of proteinaceous substrates. Shows high activities on basic nuclear substrates such as histone and protamine. May be involved in virulence. This is Neutral protease 2 homolog MGYG_00813 from Arthroderma gypseum (strain ATCC MYA-4604 / CBS 118893) (Microsporum gypseum).